We begin with the raw amino-acid sequence, 631 residues long: Probable G-protein coupled receptor 153 (631 aa).

The Extracellular portion of the chain corresponds to 1–11 (MSDERRLPSSA). Residues 12–32 (VGWLACGGLSLLANAWGILSV) form a helical membrane-spanning segment. The Cytoplasmic segment spans residues 33–41 (GAKQKKWKP). A helical transmembrane segment spans residues 42–62 (LEFLLCTLAATHMLNVAVPIA). The Extracellular segment spans residues 63-84 (TYAVVQLRRQRPDYEWNEGLCK). Residues 85 to 105 (VFVSTFYTLTLATCFSVTSIS) form a helical membrane-spanning segment. The Cytoplasmic segment spans residues 106–126 (YHRMWMVRWPVNYRLSNAKKQ). A helical membrane pass occupies residues 127–147 (AVHTVMGIWMVSFILSALPAV). Over 148-162 (GWHDTSERFYTHGCR) the chain is Extracellular. The chain crosses the membrane as a helical span at residues 163–183 (FIVAEIGLGFGVCFLLLVGGS). Residues 184-243 (VAMGMVCTAIALFQTLATQVGHRADRRTFTVPTIVVEDAQGKRRSSIDGSEPARTSLQIT) lie on the Cytoplasmic side of the membrane. A helical membrane pass occupies residues 244–264 (GLVATIVVIYDCLMGFPVLVV). Over 265-276 (SFSSLRADASAP) the chain is Extracellular. Residues 277 to 297 (WMALCVLWCSVTQALLLPLFL) traverse the membrane as a helical segment. The Cytoplasmic portion of the chain corresponds to 298–631 (WTCDRYRADL…LHSDSLGSAS (334 aa)). Disordered stretches follow at residues 486–518 (LQPS…RSAS), 546–590 (QPFP…SLSA), and 603–631 (CGSI…GSAS). Residues 605 to 617 (SISSFLSSPSESS) show a composition bias toward low complexity.

It belongs to the G-protein coupled receptor 1 family.

The protein localises to the cell membrane. Orphan receptor. The polypeptide is Probable G-protein coupled receptor 153 (Gpr153) (Mus musculus (Mouse)).